Here is a 302-residue protein sequence, read N- to C-terminus: Protein FdhE homolog (302 aa).

The protein belongs to the FdhE family.

It is found in the cytoplasm. Its function is as follows. Necessary for formate dehydrogenase activity. This Haemophilus influenzae (strain PittEE) protein is Protein FdhE homolog.